Here is a 200-residue protein sequence, read N- to C-terminus: TATA-box-binding protein 1 (200 aa).

T2 carries the N-acetylthreonine modification. Tandem repeats lie at residues 25–101 (LQNI…ARIV) and 115–192 (IQNI…YPVL).

Belongs to the TBP family. As to quaternary structure, belongs to the TFIID complex together with the TBP-associated factors (TAFs). Binds DNA as monomer. Interacts with TAF1 (via N-terminus). Interacts with MEE12/CCG1. Associates with PWP2 in the nucleus. Component of a nuclear protein complex containing at least TATA binding proteins (TBPs, e.g. TBP1 and TBP2) and ATX1.

The protein localises to the nucleus. In terms of biological role, general transcription factor that functions at the core of the DNA-binding multiprotein factor TFIID. Binding of TFIID to the TATA box is the initial transcriptional step of the pre-initiation complex (PIC), playing a role in the activation of eukaryotic genes transcribed by RNA polymerase II. This Arabidopsis thaliana (Mouse-ear cress) protein is TATA-box-binding protein 1.